Here is a 439-residue protein sequence, read N- to C-terminus: MPEYEIQVPSYRAAALTAEERTRLLARPIQNTQKIRTIVQPIIEDVKSRGEASLIDYASKFEKVQLKSAVLKAPFDDDLMKISPMIKEDIDIAFNNIFAFHSSQLRPTIAVQTMRGVVCQRMSRPINRVGLYIPGGTAVLPSTALMLGVPAKVAGCPHVVISTPVRKDGTVAPEIVYIANKIGAEAIILAGGAQAIAAMAYGISGVPKVNKIFGPGNQFVTAAKMHVQNDYGALVAIDLPAGPSEVLVIADETCNPESVALDLLSQAEHGLDSQIILLTVSLSPEMFDRIQKAINDHALRLSRSYIIKHAIKKSVIVQVDNVDQAFEWSNLYGPEHLVLHLKNASSYIPKIDNAGSVFVGPWSPVSMGDYASGTNHTLPTYGYASSYSGVSTDSFLKYITTQELTEEGIQRLGPTVIRLAELEGLTAHADAVRVRGVRL.

The NAD(+) site is built by Tyr132, Gln194, and Asn217. Positions 244, 266, and 269 each coordinate substrate. Gln266 and His269 together coordinate Zn(2+). Catalysis depends on proton acceptor residues Glu335 and His336. Residues His336, Asp369, Glu423, and His428 each coordinate substrate. Asp369 lines the Zn(2+) pocket. His428 lines the Zn(2+) pocket.

Belongs to the histidinol dehydrogenase family. Zn(2+) is required as a cofactor.

The enzyme catalyses L-histidinol + 2 NAD(+) + H2O = L-histidine + 2 NADH + 3 H(+). Its pathway is amino-acid biosynthesis; L-histidine biosynthesis; L-histidine from 5-phospho-alpha-D-ribose 1-diphosphate: step 9/9. Functionally, catalyzes the sequential NAD-dependent oxidations of L-histidinol to L-histidinaldehyde and then to L-histidine. The sequence is that of Histidinol dehydrogenase (his2) from Schizosaccharomyces pombe (strain 972 / ATCC 24843) (Fission yeast).